The chain runs to 264 residues: Propanediol uptake facilitator PduF (264 aa).

The next 2 membrane-spanning stretches (helical) occupy residues 10–30 and 42–62; these read GAEF…LSAL and ICII…GISG. Residues 66-68 carry the NPA 1 motif; that stretch reads NPA. Transmembrane regions (helical) follow at residues 84 to 104, 143 to 163, and 179 to 199; these read VLPY…LAYV, VWQA…MIMA, and LLIG…TGFA. Positions 201–203 match the NPA 2 motif; it reads NPA. A helical transmembrane segment spans residues 228–248; sequence IPYFIVPIVAPVIGACAGAAI.

Belongs to the MIP/aquaporin (TC 1.A.8) family.

Its subcellular location is the cell inner membrane. In terms of biological role, probably facilitates diffusion of 1,2-propanediol (1,2-PD) into the cell. Modeling suggests active transport of 1,2-PD is required at low extracellular concentrations to allow maximal growth and saturation of PduP/PduQ within the bacterial microcompartment (BMC); this protein may be the cellular transporter. Functionally, the 1,2-PD-specific bacterial microcompartment (BMC) concentrates low levels of 1,2-PD catabolic enzymes, concentrates volatile reaction intermediates thus enhancing pathway flux and keeps the level of toxic, mutagenic propionaldehyde low. The chain is Propanediol uptake facilitator PduF from Salmonella typhimurium (strain LT2 / SGSC1412 / ATCC 700720).